The primary structure comprises 297 residues: Protein BCCIP homolog (297 aa).

A disordered region spans residues 1-40; the sequence is MSANKQKKLSTMEVDPNEDVSSSSEDDDDDEPHPDAYKGN.

Belongs to the BCP1 family.

The sequence is that of Protein BCCIP homolog from Drosophila melanogaster (Fruit fly).